The sequence spans 471 residues: ATP synthase subunit beta (471 aa).

156–163 (GGAGVGKT) serves as a coordination point for ATP.

This sequence belongs to the ATPase alpha/beta chains family. As to quaternary structure, F-type ATPases have 2 components, CF(1) - the catalytic core - and CF(0) - the membrane proton channel. CF(1) has five subunits: alpha(3), beta(3), gamma(1), delta(1), epsilon(1). CF(0) has three main subunits: a(1), b(2) and c(9-12). The alpha and beta chains form an alternating ring which encloses part of the gamma chain. CF(1) is attached to CF(0) by a central stalk formed by the gamma and epsilon chains, while a peripheral stalk is formed by the delta and b chains.

The protein localises to the cell membrane. It carries out the reaction ATP + H2O + 4 H(+)(in) = ADP + phosphate + 5 H(+)(out). In terms of biological role, produces ATP from ADP in the presence of a proton gradient across the membrane. The catalytic sites are hosted primarily by the beta subunits. The protein is ATP synthase subunit beta of Mycoplasmoides gallisepticum (strain R(low / passage 15 / clone 2)) (Mycoplasma gallisepticum).